The following is a 95-amino-acid chain: UPF0381 protein HI_0400 (95 aa).

Belongs to the UPF0381 family.

The polypeptide is UPF0381 protein HI_0400 (Haemophilus influenzae (strain ATCC 51907 / DSM 11121 / KW20 / Rd)).